We begin with the raw amino-acid sequence, 282 residues long: Secretory carrier-associated membrane protein 1 (282 aa).

A disordered region spans residues 1–49 (MSRYQSHSFDDGEINPFANPTSVPAATSKLSPLPPEPYDRGATMDIPLD). Residues 1–117 (MSRYQSHSFD…EIPIHLQRIQ (117 aa)) are Cytoplasmic-facing. The segment covering 18-30 (ANPTSVPAATSKL) has biased composition (polar residues). Residue S31 is modified to Phosphoserine. The stretch at 48–93 (LDSGKDLKAKEKELREKEAELKRREQEIKRKEDAIAQAGIVIEEKN) forms a coiled coil. Transmembrane regions (helical) follow at residues 118–138 (YVAF…IVAV), 150–170 (IWFL…VMWY), 185–205 (FGWF…AAVA), and 233–253 (IFYF…IWVI). Topologically, residues 254-282 (QQVYMYFRGSGKAAEMKQEATRRAMMAAL) are cytoplasmic.

Belongs to the SCAMP family.

Its subcellular location is the cell membrane. It is found in the cytoplasmic vesicle. It localises to the secretory vesicle membrane. In terms of biological role, probably involved in membrane trafficking. This chain is Secretory carrier-associated membrane protein 1 (SCAMP1), found in Arabidopsis thaliana (Mouse-ear cress).